The chain runs to 198 residues: RNA 2',3'-cyclic phosphodiesterase (198 aa).

Histidine 39 serves as the catalytic Proton donor. Short sequence motifs (HXTX) lie at residues 39–42 (HLTL) and 130–133 (HITL). Residue histidine 130 is the Proton acceptor of the active site.

Belongs to the 2H phosphoesterase superfamily. ThpR family.

The enzyme catalyses a 3'-end 2',3'-cyclophospho-ribonucleotide-RNA + H2O = a 3'-end 2'-phospho-ribonucleotide-RNA + H(+). In terms of biological role, hydrolyzes RNA 2',3'-cyclic phosphodiester to an RNA 2'-phosphomonoester. This is RNA 2',3'-cyclic phosphodiesterase from Thermus thermophilus (strain ATCC 27634 / DSM 579 / HB8).